We begin with the raw amino-acid sequence, 50 residues long: uncharacterized protein (50 aa).

The disordered stretch occupies residues 28-50 (SKLSPVTNGGKTIGKSNKVSKND). The span at 29 to 50 (KLSPVTNGGKTIGKSNKVSKND) shows a compositional bias: polar residues.

This is an uncharacterized protein from Haemophilus influenzae (strain ATCC 51907 / DSM 11121 / KW20 / Rd).